Here is a 131-residue protein sequence, read N- to C-terminus: Transcriptional activatory protein CaiF (131 aa).

In terms of biological role, potential transcriptional activator of carnitine metabolism. The polypeptide is Transcriptional activatory protein CaiF (caiF) (Escherichia coli (strain K12)).